Here is a 461-residue protein sequence, read N- to C-terminus: Ribulose bisphosphate carboxylase (461 aa).

Residue N112 participates in substrate binding. The Proton acceptor role is filled by K167. A substrate-binding site is contributed by K169. Mg(2+)-binding residues include K192, D194, and E195. An N6-carboxylysine modification is found at K192. Residue H288 is the Proton acceptor of the active site. 3 residues coordinate substrate: R289, H322, and S369.

The protein belongs to the RuBisCO large chain family. Type II subfamily. Homodimer. Mg(2+) is required as a cofactor.

The enzyme catalyses 2 (2R)-3-phosphoglycerate + 2 H(+) = D-ribulose 1,5-bisphosphate + CO2 + H2O. It carries out the reaction D-ribulose 1,5-bisphosphate + O2 = 2-phosphoglycolate + (2R)-3-phosphoglycerate + 2 H(+). Its function is as follows. RuBisCO catalyzes two reactions: the carboxylation of D-ribulose 1,5-bisphosphate, the primary event in carbon dioxide fixation, as well as the oxidative fragmentation of the pentose substrate. Both reactions occur simultaneously and in competition at the same active site. This chain is Ribulose bisphosphate carboxylase, found in Rhodopseudomonas palustris (strain HaA2).